Consider the following 33-residue polypeptide: Photosystem II reaction center protein Psb30 (33 aa).

A helical membrane pass occupies residues 8–28 (QLTALAFIVLSGPLVIALLAF).

This sequence belongs to the Psb30/Ycf12 family. As to quaternary structure, PSII is composed of 1 copy each of membrane proteins PsbA, PsbB, PsbC, PsbD, PsbE, PsbF, PsbH, PsbI, PsbJ, PsbK, PsbL, PsbM, PsbT, PsbX, PsbY, PsbZ, Psb30/Ycf12, peripheral proteins of the oxygen-evolving complex and a large number of cofactors. It forms dimeric complexes.

It is found in the plastid. The protein resides in the chloroplast thylakoid membrane. A core subunit of photosystem II (PSII), probably helps stabilize the reaction center. This chain is Photosystem II reaction center protein Psb30, found in Staurastrum punctulatum (Green alga).